We begin with the raw amino-acid sequence, 469 residues long: 3-isopropylmalate dehydratase large subunit (469 aa).

[4Fe-4S] cluster-binding residues include cysteine 350, cysteine 410, and cysteine 413.

Belongs to the aconitase/IPM isomerase family. LeuC type 1 subfamily. In terms of assembly, heterodimer of LeuC and LeuD. It depends on [4Fe-4S] cluster as a cofactor.

The catalysed reaction is (2R,3S)-3-isopropylmalate = (2S)-2-isopropylmalate. The protein operates within amino-acid biosynthesis; L-leucine biosynthesis; L-leucine from 3-methyl-2-oxobutanoate: step 2/4. Its function is as follows. Catalyzes the isomerization between 2-isopropylmalate and 3-isopropylmalate, via the formation of 2-isopropylmaleate. In Allorhizobium ampelinum (strain ATCC BAA-846 / DSM 112012 / S4) (Agrobacterium vitis (strain S4)), this protein is 3-isopropylmalate dehydratase large subunit.